We begin with the raw amino-acid sequence, 394 residues long: Glycerol-1-phosphate dehydrogenase [NAD(P)+] (394 aa).

NAD(+) is bound by residues aspartate 54, 116–120, and 138–141; these read GTIHD and TAPS. Residue aspartate 143 coordinates substrate. Residue serine 147 participates in NAD(+) binding. Substrate is bound at residue aspartate 190. The Ni(2+) site is built by aspartate 190 and histidine 270. Histidine 274 is a substrate binding site. Histidine 290 contacts Ni(2+).

This sequence belongs to the glycerol-1-phosphate dehydrogenase family. As to quaternary structure, homodimer. Requires Ni(2+) as cofactor.

The protein localises to the cytoplasm. It carries out the reaction sn-glycerol 1-phosphate + NAD(+) = dihydroxyacetone phosphate + NADH + H(+). It catalyses the reaction sn-glycerol 1-phosphate + NADP(+) = dihydroxyacetone phosphate + NADPH + H(+). Its function is as follows. Catalyzes the NAD(P)H-dependent reduction of dihydroxyacetonephosphate (DHAP or glycerone phosphate) to glycerol 1-phosphate (G1P). The G1P thus generated is probably used for the synthesis of phosphoglycerolipids in Gram-positive bacterial species. This chain is Glycerol-1-phosphate dehydrogenase [NAD(P)+], found in Bacillus velezensis (strain DSM 23117 / BGSC 10A6 / LMG 26770 / FZB42) (Bacillus amyloliquefaciens subsp. plantarum).